Reading from the N-terminus, the 284-residue chain is D-tagatose-1,6-bisphosphate aldolase subunit GatY (284 aa).

Catalysis depends on aspartate 82, which acts as the Proton donor. Zn(2+)-binding residues include histidine 83 and histidine 180. Glycine 181 is a binding site for dihydroxyacetone phosphate. Histidine 208 is a Zn(2+) binding site. Residues 209-211 and 230-233 each bind dihydroxyacetone phosphate; these read GAS and NVAT.

Belongs to the class II fructose-bisphosphate aldolase family. TagBP aldolase GatY subfamily. In terms of assembly, forms a complex with GatZ. Zn(2+) serves as cofactor.

The enzyme catalyses D-tagatofuranose 1,6-bisphosphate = D-glyceraldehyde 3-phosphate + dihydroxyacetone phosphate. It functions in the pathway carbohydrate metabolism; D-tagatose 6-phosphate degradation; D-glyceraldehyde 3-phosphate and glycerone phosphate from D-tagatose 6-phosphate: step 2/2. Functionally, catalytic subunit of the tagatose-1,6-bisphosphate aldolase GatYZ, which catalyzes the reversible aldol condensation of dihydroxyacetone phosphate (DHAP or glycerone-phosphate) with glyceraldehyde 3-phosphate (G3P) to produce tagatose 1,6-bisphosphate (TBP). Requires GatZ subunit for full activity and stability. Is involved in the catabolism of galactitol. In Escherichia coli (strain K12 / MC4100 / BW2952), this protein is D-tagatose-1,6-bisphosphate aldolase subunit GatY.